Reading from the N-terminus, the 372-residue chain is L-lysine 4-hydroxylase (372 aa).

Residues H176, E178, and H312 each contribute to the Fe cation site.

Belongs to the clavaminate synthase family. It depends on Fe(2+) as a cofactor.

It carries out the reaction L-lysine + 2-oxoglutarate + O2 = (4R)-4-hydroxy-L-lysine + succinate + CO2. Its function is as follows. Alpha-ketoglutarate-dependent dioxygenase that in vitro catalyzes the regio- and stereoselective hydroxylation of L-lysine, leading to (4R)-4-hydroxy-L-lysine. This Flavobacterium sp. (strain CF136) protein is L-lysine 4-hydroxylase.